The following is a 197-amino-acid chain: Wadjet protein JetB (197 aa).

Component of antiplasmid transformation system Wadjet type I, composed of JetA, JetB, JetC and JetD. Expression of Wadjet type I in B.subtilis (strain BEST7003) reduces the transformation efficiency of plasmid pHCMC05. The protein is Wadjet protein JetB of Bacillus cereus (strain Q1).